Here is a 604-residue protein sequence, read N- to C-terminus: Asparagine synthetase [glutamine-hydrolyzing] 1 (604 aa).

The active-site Nucleophile is cysteine 2. The Glutamine amidotransferase type-2 domain maps to 2 to 186; that stretch reads CGILAVLGAA…PGHLYSSAAG (185 aa). Residues 50-54, 75-77, and aspartate 99 contribute to the L-glutamine site; these read RLAIV and NGE. An Asparagine synthetase domain is found at 211 to 451; it reads LREAFEKAVI…LPKHILYRQK (241 aa). Residues leucine 232, valine 268, and 342-343 each bind ATP; that span reads SG.

It carries out the reaction L-aspartate + L-glutamine + ATP + H2O = L-asparagine + L-glutamate + AMP + diphosphate + H(+). The protein operates within amino-acid biosynthesis; L-asparagine biosynthesis. Functionally, essential for nitrogen assimilation, distribution and remobilization within the plant via the phloem. The polypeptide is Asparagine synthetase [glutamine-hydrolyzing] 1 (Oryza sativa subsp. japonica (Rice)).